The primary structure comprises 280 residues: CAG pathogenicity island protein 12 (280 aa).

Residues 1-20 (MKLRASVLIGATILCLILSA) form the signal peptide. Residue Cys-21 is the site of N-palmitoyl cysteine attachment. Cys-21 carries S-diacylglycerol cysteine lipidation.

It is found in the cell membrane. The sequence is that of CAG pathogenicity island protein 12 (cagT) from Helicobacter pylori (strain ATCC 700392 / 26695) (Campylobacter pylori).